The following is a 115-amino-acid chain: Protein V2 (115 aa).

It belongs to the geminiviridae protein AV2/V2 family. Interacts with host SGS3.

The protein localises to the host cytoplasm. It is found in the host perinuclear region. Its function is as follows. Through its interaction with host SGS3, acts as a suppressor of RNA-mediated gene silencing, also known as post-transcriptional gene silencing (PTGS), a mechanism of plant viral defense that limits the accumulation of viral RNAs. The protein is Protein V2 of Tomato yellow leaf curl Sardinia virus (isolate Spain-2) (TYLCSV).